The primary structure comprises 307 residues: UDP-N-acetylenolpyruvoylglucosamine reductase (307 aa).

Residues 34 to 198 enclose the FAD-binding PCMH-type domain; that stretch reads TGGNADFYLS…LEAAFTLEPG (165 aa). The active site involves Arg-177. The active-site Proton donor is the Ser-227. The active site involves Glu-297.

The protein belongs to the MurB family. Requires FAD as cofactor.

The protein resides in the cytoplasm. It catalyses the reaction UDP-N-acetyl-alpha-D-muramate + NADP(+) = UDP-N-acetyl-3-O-(1-carboxyvinyl)-alpha-D-glucosamine + NADPH + H(+). Its pathway is cell wall biogenesis; peptidoglycan biosynthesis. Functionally, cell wall formation. This chain is UDP-N-acetylenolpyruvoylglucosamine reductase, found in Staphylococcus haemolyticus (strain JCSC1435).